Consider the following 319-residue polypeptide: tRNA uridine(34) hydroxylase (319 aa).

The Rhodanese domain occupies 127–221 (KQEDTVIIDA…YGKDPEVQGE (95 aa)). Residue Cys181 is the Cysteine persulfide intermediate of the active site.

It belongs to the TrhO family.

It catalyses the reaction uridine(34) in tRNA + AH2 + O2 = 5-hydroxyuridine(34) in tRNA + A + H2O. In terms of biological role, catalyzes oxygen-dependent 5-hydroxyuridine (ho5U) modification at position 34 in tRNAs. The polypeptide is tRNA uridine(34) hydroxylase (Bacillus cereus (strain G9842)).